The primary structure comprises 243 residues: 2-C-methyl-D-erythritol 4-phosphate cytidylyltransferase (243 aa).

This sequence belongs to the IspD/TarI cytidylyltransferase family. IspD subfamily.

It carries out the reaction 2-C-methyl-D-erythritol 4-phosphate + CTP + H(+) = 4-CDP-2-C-methyl-D-erythritol + diphosphate. It participates in isoprenoid biosynthesis; isopentenyl diphosphate biosynthesis via DXP pathway; isopentenyl diphosphate from 1-deoxy-D-xylulose 5-phosphate: step 2/6. Its function is as follows. Catalyzes the formation of 4-diphosphocytidyl-2-C-methyl-D-erythritol from CTP and 2-C-methyl-D-erythritol 4-phosphate (MEP). In Pelodictyon phaeoclathratiforme (strain DSM 5477 / BU-1), this protein is 2-C-methyl-D-erythritol 4-phosphate cytidylyltransferase.